Consider the following 117-residue polypeptide: Large ribosomal subunit protein bL20c (117 aa).

Belongs to the bacterial ribosomal protein bL20 family.

Its subcellular location is the plastid. It is found in the chloroplast. Its function is as follows. Binds directly to 23S ribosomal RNA and is necessary for the in vitro assembly process of the 50S ribosomal subunit. It is not involved in the protein synthesizing functions of that subunit. This is Large ribosomal subunit protein bL20c from Ceratophyllum demersum (Rigid hornwort).